We begin with the raw amino-acid sequence, 193 residues long: MNGMAVVMIIRKYFLIIALLVMPWLAIPSVSAADKGGFNTFTDNVAETWRQPEHYDLYVPAITWHARFAYDKEKTDRYNERPWGVGFGQSRWDDKGNWHGLYMMAFKDSFNKWEPIGGYGWEKTWRPLEDDNFRLGLGFTAGVTARDNWNYIPIPVLLPLASIGYGPATFQMTYIPGSYNNGNVYFAWMRFQF.

A signal peptide spans 1 to 32 (MNGMAVVMIIRKYFLIIALLVMPWLAIPSVSA). Residues His-65, Asp-108, and Ser-109 contribute to the active site.

The protein belongs to the lipid A palmitoyltransferase family. In terms of assembly, homodimer.

Its subcellular location is the cell outer membrane. It carries out the reaction a lipid A + a 1,2-diacyl-sn-glycero-3-phosphocholine = a hepta-acyl lipid A + a 2-acyl-sn-glycero-3-phosphocholine. The enzyme catalyses a lipid IVA + a 1,2-diacyl-sn-glycero-3-phosphocholine = a lipid IVB + a 2-acyl-sn-glycero-3-phosphocholine. The catalysed reaction is a lipid IIA + a 1,2-diacyl-sn-glycero-3-phosphocholine = a lipid IIB + a 2-acyl-sn-glycero-3-phosphocholine. Functionally, transfers a fatty acid residue from the sn-1 position of a phospholipid to the N-linked hydroxyfatty acid chain on the proximal unit of lipid A or its precursors. In Salmonella paratyphi C (strain RKS4594), this protein is Lipid A acyltransferase PagP.